The chain runs to 257 residues: Diacetyl reductase [(S)-acetoin forming] (257 aa).

NAD(+) is bound at residue 6–30 (IITGAAGGLGKGIAERLANDGFNIV). Ser139 contributes to the substrate binding site. Tyr152 (proton acceptor) is an active-site residue. The active site involves Lys156.

This sequence belongs to the short-chain dehydrogenases/reductases (SDR) family.

It carries out the reaction (S)-acetoin + NAD(+) = diacetyl + NADH + H(+). Catalyzes the irreversible reduction of 2,3-butanediol to (S)-acetoin in the presence of NADH. The chain is Diacetyl reductase [(S)-acetoin forming] (butA) from Staphylococcus epidermidis (strain ATCC 12228 / FDA PCI 1200).